A 525-amino-acid chain; its full sequence is MSNIHEHKILILDFGSQYTQLIARRIREIGVYCELWAWDVSEEQIRGFAPNGIILAGGPESVTADNSPRAPEYVFNAGVPVLGICYGMQTMSEQLGGKVIQGVGEGEFGYAQVEVQTESALFKAIEDAVSETGKPLLDVWMSHGDKVSEIPDGFVTVANTETCPFAAMANEDKKFYGVQFHPEVTHTRQGKRMLEHFALDICGCDANWKPSSIIEDAVERLKKQIGDDEVILGLSGGVDSSVVAMLLHRAIGDKLTCVFVDNGLLRLNEAQQVMDMFGDHFGLNIIHVDAENRFLDAMAGEADPESKRKIIGHVFVEIFDEESKKCANAKWLAQGTIYPDVIESAGSATGKAHVIKSHHNVGGLPDDMELGLVEPLRELFKDEVRKIGLELGLPYDMLYRHPFPGPGLGVRVLGEVKKEYCDLLRLADAIFIEELHKADLYNKVSQAFTVFLPVRSVGVMGDGRKYDWVVSLRAVETIDFMTAHWAHLPYDFLGRVSNRIINEIDGISRVVYDISGKPPATIEWE.

A Glutamine amidotransferase type-1 domain is found at 8–207 (KILILDFGSQ…ALDICGCDAN (200 aa)). The active-site Nucleophile is Cys85. Active-site residues include His181 and Glu183. The GMPS ATP-PPase domain occupies 208–400 (WKPSSIIEDA…LGLPYDMLYR (193 aa)). 235 to 241 (SGGVDSS) is an ATP binding site.

As to quaternary structure, homodimer.

The enzyme catalyses XMP + L-glutamine + ATP + H2O = GMP + L-glutamate + AMP + diphosphate + 2 H(+). It functions in the pathway purine metabolism; GMP biosynthesis; GMP from XMP (L-Gln route): step 1/1. Functionally, catalyzes the synthesis of GMP from XMP. In Shewanella piezotolerans (strain WP3 / JCM 13877), this protein is GMP synthase [glutamine-hydrolyzing].